We begin with the raw amino-acid sequence, 654 residues long: Endoplasmic reticulum chaperone BiP (654 aa).

Positions 1-18 (MKFTVVAAALLLLCAVRA) are cleaved as a signal peptide. Residues 1-80 (MKFTVVAAAL…EGERLIGDAA (80 aa)) are required for interaction with ELAPOR1. Residue 36–39 (GTTY) participates in ATP binding. Phosphoserine is present on serine 86. Lysine 96 serves as a coordination point for ATP. Lysine 125 carries the N6-acetyllysine modification. Residues 125–280 (KPYIQVDIGG…KKKTGKDVRK (156 aa)) form a nucleotide-binding (NBD) region. Tyrosine 160 bears the 3'-nitrotyrosine mark. At lysine 213 the chain carries N6-acetyllysine. An ATP-binding site is contributed by 227–229 (GGT). Lysine 271 is subject to N6-acetyllysine. 293-300 (EKAKRALS) serves as a coordination point for ATP. Lysine 326 carries the post-translational modification N6-acetyllysine. A Glycyl lysine isopeptide (Lys-Gly) (interchain with G-Cter in SUMO2) cross-link involves residue lysine 352. Lysine 353 carries the post-translational modification N6-acetyllysine; alternate. Residue lysine 353 forms a Glycyl lysine isopeptide (Lys-Gly) (interchain with G-Cter in SUMO1); alternate linkage. 364–367 (GSTR) contacts ATP. The segment at 409–419 (QDTGDLVLLDV) is interdomain linker. The substrate-binding (SBD) stretch occupies residues 420 to 500 (CPLTLGIETV…PRGVPQIEVT (81 aa)). Lysine 447 carries the N6-succinyllysine modification. Arginine 492 carries the omega-N-methylarginine modification. The residue at position 518 (threonine 518) is an O-AMP-threonine; alternate. The residue at position 518 (threonine 518) is a Phosphothreonine; alternate. N6,N6,N6-trimethyllysine; by METTL21A; in vitro is present on lysine 585. Position 585 is an N6,N6-dimethyllysine; alternate (lysine 585). Lysine 585 carries the post-translational modification N6-methyllysine; alternate. An N6-methyllysine modification is found at lysine 591. Residues 631–654 (ISKLYGSGGPPPTGEEDTSEKDEL) form a disordered region. Phosphothreonine is present on residues threonine 643 and threonine 648. Over residues 644 to 654 (GEEDTSEKDEL) the composition is skewed to acidic residues. Serine 649 is subject to Phosphoserine. Positions 651–654 (KDEL) match the Prevents secretion from ER motif.

This sequence belongs to the heat shock protein 70 family. As to quaternary structure, monomer and homooligomer; homooligomerization via the interdomain linker inactivates the chaperone activity and acts as a storage of HSPA5/BiP molecules. Interacts with DNAJC1 (via J domain). Component of an EIF2 complex at least composed of CELF1/CUGBP1, CALR, CALR3, EIF2S1, EIF2S2, HSP90B1 and HSPA5. Part of a large chaperone multiprotein complex comprising DNAJB11, HSP90B1, HSPA5, HYOU, PDIA2, PDIA4, PDIA6, PPIB, SDF2L1, UGGT1 and very small amounts of ERP29, but not, or at very low levels, CALR nor CANX. Interacts with TMEM132A and TRIM21. May form a complex with ERLEC1, OS9, SEL1L and SYVN1. Interacts with DNAJC10. Interacts with DNAJB9/ERdj4; leading to recruit HSPA5/BiP to ERN1/IRE1. Interacts with ERN1/IRE1 (via luminal domain); the interaction takes place following interaction with DNAJB9/ERdj4 and leads to inactivate ERN1/IRE1, the interaction also competitively inhibits ERN1 interaction with MANF. Interacts directly with MANF (via SAP domain); the interaction inhibits ATP binding to HSPA5/BiP and subsequent nucleotide exchange. Interacts with EIF2AK3/PERK (via luminal domain); interaction leads to inactivate EIF2AK3/PERK. Interacts with MX1. Interacts with METTL23. Interacts with CEMIP; the interaction induces calcium leakage from the endoplasmic reticulum and cell migration. Interacts with PCSK4 form; the interaction takes place in the endoplasmic reticulum. Interacts with CIPC. Interacts with CCDC88B (via C-terminus); the interaction opposes ERN1-mediated JNK activation, protecting against apoptosis. Interacts with INPP5K; necessary for INPP5K localization at the endoplasmic reticulum. Interacts with MANF; the interaction is direct. Interacts with LOXL2; leading to activate the ERN1/IRE1-XBP1 pathway of the unfolded protein response. Interacts with CLU under stressed condition; interaction increases CLU protein stability; facilitates its retrotranslocation and redistribution to the mitochondria; cooperatively suppress stress-induced apoptosis by stabilizing mitochondrial membrane integrity. Interacts with CCDC47. Interacts with CLN3. Interacts with ELAPOR1; may regulate the function of HSPA5 in apoptosis and cell proliferation. Interacts with CASP7. Interacts with ILDR2; the interaction stabilizes ILDR2 expression. Interacts with ADAM7. In terms of processing, in unstressed cells, AMPylation at Thr-518 by FICD inactivates the chaperome activity: AMPylated form is locked in a relatively inert state and only weakly stimulated by J domain-containing proteins. In response to endoplasmic reticulum stress, de-AMPylation by the same protein, FICD, restores the chaperone activity.

The protein resides in the endoplasmic reticulum lumen. Its subcellular location is the melanosome. It is found in the cytoplasm. It localises to the cell surface. It catalyses the reaction ATP + H2O = ADP + phosphate + H(+). Its activity is regulated as follows. The chaperone activity is regulated by ATP-induced allosteric coupling of the nucleotide-binding (NBD) and substrate-binding (SBD) domains. In the ADP-bound and nucleotide-free (apo) states, the two domains have little interaction. In contrast, in the ATP-bound state the two domains are tightly coupled, which results in drastically accelerated kinetics in both binding and release of polypeptide substrates. J domain-containing co-chaperones (DNAJB9/ERdj4 or DNAJC10/ERdj5) stimulate the ATPase activity and are required for efficient substrate recognition by HSPA5/BiP. Homooligomerization inactivates participating HSPA5/BiP protomers and probably act as reservoirs to store HSPA5/BiP molecules when they are not needed by the cell. Its function is as follows. Endoplasmic reticulum chaperone that plays a key role in protein folding and quality control in the endoplasmic reticulum lumen. Involved in the correct folding of proteins and degradation of misfolded proteins via its interaction with DNAJC10/ERdj5, probably to facilitate the release of DNAJC10/ERdj5 from its substrate. Acts as a key repressor of the EIF2AK3/PERK and ERN1/IRE1-mediated unfolded protein response (UPR). In the unstressed endoplasmic reticulum, recruited by DNAJB9/ERdj4 to the luminal region of ERN1/IRE1, leading to disrupt the dimerization of ERN1/IRE1, thereby inactivating ERN1/IRE1. Also binds and inactivates EIF2AK3/PERK in unstressed cells. Accumulation of misfolded protein in the endoplasmic reticulum causes release of HSPA5/BiP from ERN1/IRE1 and EIF2AK3/PERK, allowing their homodimerization and subsequent activation. Plays an auxiliary role in post-translational transport of small presecretory proteins across endoplasmic reticulum (ER). May function as an allosteric modulator for SEC61 channel-forming translocon complex, likely cooperating with SEC62 to enable the productive insertion of these precursors into SEC61 channel. Appears to specifically regulate translocation of precursors having inhibitory residues in their mature region that weaken channel gating. May also play a role in apoptosis and cell proliferation. The chain is Endoplasmic reticulum chaperone BiP from Rattus norvegicus (Rat).